The following is a 278-amino-acid chain: Large ribosomal subunit protein uL2 (278 aa).

The disordered stretch occupies residues 223–278; the sequence is GVAMNPIDHPHGGGEGRTSGGRHPVTPWGFPTKGKKTRSNKRTDTFIVSSRHNRKK.

It belongs to the universal ribosomal protein uL2 family. Part of the 50S ribosomal subunit. Forms a bridge to the 30S subunit in the 70S ribosome.

Its function is as follows. One of the primary rRNA binding proteins. Required for association of the 30S and 50S subunits to form the 70S ribosome, for tRNA binding and peptide bond formation. It has been suggested to have peptidyltransferase activity; this is somewhat controversial. Makes several contacts with the 16S rRNA in the 70S ribosome. This chain is Large ribosomal subunit protein uL2, found in Methylobacterium sp. (strain 4-46).